The chain runs to 204 residues: Large ribosomal subunit protein eL15z (204 aa).

A disordered region spans residues 161–204 (LRGLTSEGKKNRGLRGKGHNNHKNRPSRRATWKKNNSLSLRRYR). The span at 171 to 192 (NRGLRGKGHNNHKNRPSRRATW) shows a compositional bias: basic residues. Over residues 193–204 (KKNNSLSLRRYR) the composition is skewed to polar residues.

Belongs to the eukaryotic ribosomal protein eL15 family.

The chain is Large ribosomal subunit protein eL15z (RPL15A) from Arabidopsis thaliana (Mouse-ear cress).